The primary structure comprises 217 residues: MLITFEGIDGAGKSTQVVKLKRHLQERGREVLTLREPGGTPVAEQIRELLLESHNDITSIAELLLFSASRAELMEKIIVPALEDGCDVILDRFFDSTTAYQGYGRGLNLDMLAEINRIASHGIRPDITFYLDLTPEDALLRKFSEKSLPLAFESEELDRMENSGLEFYQRVRAGYHAILEAEPQRIIMIDALLTPQEIHRKILSALQALEVPEDGKR.

7–14 serves as a coordination point for ATP; the sequence is GIDGAGKS.

It belongs to the thymidylate kinase family.

The catalysed reaction is dTMP + ATP = dTDP + ADP. Its function is as follows. Phosphorylation of dTMP to form dTDP in both de novo and salvage pathways of dTTP synthesis. This chain is Thymidylate kinase, found in Chlorobaculum parvum (strain DSM 263 / NCIMB 8327) (Chlorobium vibrioforme subsp. thiosulfatophilum).